Here is a 505-residue protein sequence, read N- to C-terminus: Maturase K (505 aa).

Belongs to the intron maturase 2 family. MatK subfamily.

The protein localises to the plastid. It localises to the chloroplast. In terms of biological role, usually encoded in the trnK tRNA gene intron. Probably assists in splicing its own and other chloroplast group II introns. This Gomphrena pulchella (Globe amaranth) protein is Maturase K.